The chain runs to 550 residues: Rhodopsin kinase grk7-b (550 aa).

Positions 22–45 (SSEGDAKELQKRRKSLSLPPPDVS) are disordered. The residue at position 36 (serine 36) is a Phosphoserine. Positions 57-174 (YQSICVEQPI…QNSPFYDRFL (118 aa)) constitute an RGS domain. One can recognise a Protein kinase domain in the interval 189 to 451 (FYEFRILGKG…DDDPRKHAFF (263 aa)). ATP contacts are provided by residues 195–203 (LGKGGFGEV) and lysine 218. Aspartate 314 functions as the Proton acceptor in the catalytic mechanism. In terms of domain architecture, AGC-kinase C-terminal spans 452-517 (KSINFQRLEA…GAVPISWQKE (66 aa)). At serine 487 the chain carries Phosphoserine. A disordered region spans residues 531–550 (SREVTGGGNSGEKSGVCSIL). Cysteine 547 carries the cysteine methyl ester modification. Residue cysteine 547 is the site of S-geranylgeranyl cysteine attachment. The propeptide at 548–550 (SIL) is removed in mature form.

This sequence belongs to the protein kinase superfamily. AGC Ser/Thr protein kinase family. GPRK subfamily. Autophosphorylated in vitro at Ser-487. Phosphorylation at Ser-36 is regulated by light and activated by cAMP. Retina, cones.

It is found in the membrane. It catalyses the reaction L-threonyl-[rhodopsin] + ATP = O-phospho-L-threonyl-[rhodopsin] + ADP + H(+). It carries out the reaction L-seryl-[rhodopsin] + ATP = O-phospho-L-seryl-[rhodopsin] + ADP + H(+). Functionally, retina-specific kinase involved in the shutoff of the photoresponse and adaptation to changing light conditions via cone opsin phosphorylation, including rhodopsin (RHO). This chain is Rhodopsin kinase grk7-b (grk7-b), found in Xenopus laevis (African clawed frog).